Here is a 143-residue protein sequence, read N- to C-terminus: MSLTAKDKDTVRAFWAKASGKAAEIGSDALSRMLVVYPQTKTYFSHWKDLSPGSEPVKKHGKSVMGGVADAVMKIEDLNAGLLNLSELHAFTLRVDPANFKILSHNILVVMAIMFPKDFTPEVHVAMDKFLAALSRALAEKYR.

At serine 2 the chain carries N-acetylserine. Positions serine 2 to arginine 143 constitute a Globin domain. Histidine 60 is a binding site for O2. Histidine 89 serves as a coordination point for heme b.

Belongs to the globin family. Hb1 is a heterotetramer of two alpha-1 chains and two beta-1 chains. In terms of tissue distribution, red blood cells.

Its function is as follows. Involved in oxygen transport from gills to the various peripheral tissues. This is Hemoglobin subunit alpha-1 (hba1) from Anarhichas minor (Arctic spotted wolffish).